Consider the following 86-residue polypeptide: Molybdopterin synthase sulfur carrier subunit (86 aa).

Glycine 86 carries the 1-thioglycine; alternate modification. Glycyl adenylate; alternate is present on glycine 86.

This sequence belongs to the MoaD family. MOCS2A subfamily. Heterotetramer; composed of 2 small (mocs2s) and 2 large (mocs2l) subunits. Post-translationally, C-terminal thiocarboxylation occurs in 2 steps, it is first acyl-adenylated (-COAMP) via the hesA/moeB/thiF part of mocs3, then thiocarboxylated (-COSH) via the rhodanese domain of mocs3.

The protein resides in the cytoplasm. It participates in cofactor biosynthesis; molybdopterin biosynthesis. Functionally, acts as a sulfur carrier required for molybdopterin biosynthesis. Component of the molybdopterin synthase complex that catalyzes the conversion of precursor Z into molybdopterin by mediating the incorporation of 2 sulfur atoms into precursor Z to generate a dithiolene group. In the complex, serves as sulfur donor by being thiocarboxylated (-COSH) at its C-terminus by mocs3. After interaction with mocs2l, the sulfur is then transferred to precursor Z to form molybdopterin. The polypeptide is Molybdopterin synthase sulfur carrier subunit (mocs2s) (Dictyostelium discoideum (Social amoeba)).